A 382-amino-acid chain; its full sequence is 1-deoxy-D-xylulose 5-phosphate reductoisomerase (382 aa).

Thr-10, Gly-11, Ser-12, Ile-13, Gly-36, and Asn-122 together coordinate NADPH. Lys-123 contacts 1-deoxy-D-xylulose 5-phosphate. Residue Glu-124 coordinates NADPH. Asp-148 serves as a coordination point for Mn(2+). Residues Ser-149, Glu-150, Ser-174, and His-197 each contribute to the 1-deoxy-D-xylulose 5-phosphate site. A Mn(2+)-binding site is contributed by Glu-150. Gly-203 is an NADPH binding site. The 1-deoxy-D-xylulose 5-phosphate site is built by Ser-210, Asn-215, Lys-216, and Glu-219. Residue Glu-219 participates in Mn(2+) binding.

The protein belongs to the DXR family. Requires Mg(2+) as cofactor. It depends on Mn(2+) as a cofactor.

The enzyme catalyses 2-C-methyl-D-erythritol 4-phosphate + NADP(+) = 1-deoxy-D-xylulose 5-phosphate + NADPH + H(+). It participates in isoprenoid biosynthesis; isopentenyl diphosphate biosynthesis via DXP pathway; isopentenyl diphosphate from 1-deoxy-D-xylulose 5-phosphate: step 1/6. Catalyzes the NADPH-dependent rearrangement and reduction of 1-deoxy-D-xylulose-5-phosphate (DXP) to 2-C-methyl-D-erythritol 4-phosphate (MEP). This chain is 1-deoxy-D-xylulose 5-phosphate reductoisomerase, found in Chlorobium limicola (strain DSM 245 / NBRC 103803 / 6330).